Here is a 209-residue protein sequence, read N- to C-terminus: Urease accessory protein UreG (209 aa).

Residue 11-18 participates in GTP binding; it reads GPVGSGKT.

It belongs to the SIMIBI class G3E GTPase family. UreG subfamily. In terms of assembly, homodimer. UreD, UreF and UreG form a complex that acts as a GTP-hydrolysis-dependent molecular chaperone, activating the urease apoprotein by helping to assemble the nickel containing metallocenter of UreC. The UreE protein probably delivers the nickel.

It is found in the cytoplasm. Functionally, facilitates the functional incorporation of the urease nickel metallocenter. This process requires GTP hydrolysis, probably effectuated by UreG. The sequence is that of Urease accessory protein UreG from Edwardsiella ictaluri (strain 93-146).